The primary structure comprises 201 residues: Dephospho-CoA kinase (201 aa).

Residues I3–S201 form the DPCK domain. Residue A11–T16 participates in ATP binding.

This sequence belongs to the CoaE family.

It is found in the cytoplasm. The catalysed reaction is 3'-dephospho-CoA + ATP = ADP + CoA + H(+). Its pathway is cofactor biosynthesis; coenzyme A biosynthesis; CoA from (R)-pantothenate: step 5/5. In terms of biological role, catalyzes the phosphorylation of the 3'-hydroxyl group of dephosphocoenzyme A to form coenzyme A. The protein is Dephospho-CoA kinase of Gluconobacter oxydans (strain 621H) (Gluconobacter suboxydans).